The primary structure comprises 460 residues: MATGKIIQVIGAVVDVEFPQDTVPKVYDALEVQNGEAKLVLEVQQQLGGGVVRCIAMGTSDGLSRGLSVTDLGHPIEVPVGKATLGRIMNVLGEPIDMKGDIGEEERWAIHRPAPSYEELSNSQELLETGIKVMDLICPFAKGGKVGLFGGAGVGKTVNMMELIRNIAIEHSGYSVFAGVGERTREGNDFYHEMTDSNVLDKVSLVYGQMNEPPGNRLRVALTGLTMAEKFRDEGRDVLLFVDNIYRYTLAGTEVSALLGRMPSAVGYQPTLAEEMGVLQERITSTKTGSITSVQAVYVPADDLTDPSPATTFAHLDATVVLSRQIASLGIYPAVDPLDSTSRQLDPLVVGQEHYNVARGVQSILQRYQELKDIIAILGMDELSEDDKLVVARARKIQRFLSQPFFVAEVFTGSPGKFVSLKDTIRGFKGILDGDYDHLPEQAFYMVGTIEEAVEKAKKL.

150 to 157 (GGAGVGKT) is an ATP binding site.

Belongs to the ATPase alpha/beta chains family. As to quaternary structure, F-type ATPases have 2 components, CF(1) - the catalytic core - and CF(0) - the membrane proton channel. CF(1) has five subunits: alpha(3), beta(3), gamma(1), delta(1), epsilon(1). CF(0) has three main subunits: a(1), b(2) and c(9-12). The alpha and beta chains form an alternating ring which encloses part of the gamma chain. CF(1) is attached to CF(0) by a central stalk formed by the gamma and epsilon chains, while a peripheral stalk is formed by the delta and b chains.

The protein localises to the cell inner membrane. The enzyme catalyses ATP + H2O + 4 H(+)(in) = ADP + phosphate + 5 H(+)(out). Functionally, produces ATP from ADP in the presence of a proton gradient across the membrane. The catalytic sites are hosted primarily by the beta subunits. In Photorhabdus laumondii subsp. laumondii (strain DSM 15139 / CIP 105565 / TT01) (Photorhabdus luminescens subsp. laumondii), this protein is ATP synthase subunit beta.